We begin with the raw amino-acid sequence, 602 residues long: Probable translation initiation factor IF-2 (602 aa).

Positions 10-227 (LRQPIVVVLG…LLAGLTQNYM (218 aa)) constitute a tr-type G domain. Residues 19 to 26 (GHVDHGKT) are G1. 19-26 (GHVDHGKT) is a binding site for GTP. Positions 44–48 (EMTQE) are G2. The interval 83 to 86 (DTPG) is G3. Residues 83–87 (DTPGH) and 137–140 (NKID) each bind GTP. The G4 stretch occupies residues 137-140 (NKID). The G5 stretch occupies residues 205 to 207 (SAK).

It belongs to the TRAFAC class translation factor GTPase superfamily. Classic translation factor GTPase family. IF-2 subfamily.

Functionally, function in general translation initiation by promoting the binding of the formylmethionine-tRNA to ribosomes. Seems to function along with eIF-2. In Sulfurisphaera tokodaii (strain DSM 16993 / JCM 10545 / NBRC 100140 / 7) (Sulfolobus tokodaii), this protein is Probable translation initiation factor IF-2.